The sequence spans 141 residues: VLSPADKKNVKAAWDKVGGHAGEYGAEALERMFLSFPTTKTYFPHFNLSHGSDQVKGHGKKVADALTLAVGHVDDMPQALSKLSDLHAHKLRVDPVNFKLLSHCLLVTLAAHLPAEFTPAVHASLDKFLASVSTVLTSKYR.

The Globin domain maps to 1–141 (VLSPADKKNV…VSTVLTSKYR (141 aa)). A Phosphoserine modification is found at Ser-3. An N6-succinyllysine mark is found at Lys-7 and Lys-11. N6-acetyllysine; alternate is present on Lys-16. Lys-16 carries the post-translational modification N6-succinyllysine; alternate. Tyr-24 bears the Phosphotyrosine mark. At Ser-35 the chain carries Phosphoserine. At Lys-40 the chain carries N6-succinyllysine. Residue Ser-49 is modified to Phosphoserine. An O2-binding site is contributed by His-58. His-87 is a heme b binding site. At Ser-102 the chain carries Phosphoserine. Thr-108 carries the post-translational modification Phosphothreonine. Phosphoserine occurs at positions 124 and 131. Residues Thr-134 and Thr-137 each carry the phosphothreonine modification. Ser-138 carries the post-translational modification Phosphoserine.

This sequence belongs to the globin family. In terms of assembly, heterotetramer of two alpha chains and two beta chains. Red blood cells.

Functionally, involved in oxygen transport from the lung to the various peripheral tissues. This is Hemoglobin subunit alpha-1/2 from Mandrillus sphinx (Mandrill).